An 838-amino-acid chain; its full sequence is Alpha-glucan phosphorylase, H isozyme (838 aa).

Positions 1 to 21 (MEGGAKSNDVSAAPIAQPLSE) are disordered. Lys-684 carries the post-translational modification N6-(pyridoxal phosphate)lysine.

It belongs to the glycogen phosphorylase family. Pyridoxal 5'-phosphate serves as cofactor.

It localises to the cytoplasm. It catalyses the reaction [(1-&gt;4)-alpha-D-glucosyl](n) + phosphate = [(1-&gt;4)-alpha-D-glucosyl](n-1) + alpha-D-glucose 1-phosphate. Phosphorylase is an important allosteric enzyme in carbohydrate metabolism. Enzymes from different sources differ in their regulatory mechanisms and in their natural substrates. However, all known phosphorylases share catalytic and structural properties. This chain is Alpha-glucan phosphorylase, H isozyme, found in Solanum tuberosum (Potato).